The primary structure comprises 431 residues: 3'3'-cGAMP-specific phosphodiesterase 1 (431 aa).

The HD domain occupies Asp-39–Leu-155. The HD-GYP domain maps to Gly-231–Pro-427. A divalent metal cation-binding residues include His-288 and Asp-289. Lys-292 serves as the catalytic Proton donor. A divalent metal cation contacts are provided by His-317, His-341, His-342, and Asp-370.

In terms of assembly, monomer. Ca(2+) serves as cofactor. Requires Mg(2+) as cofactor.

The enzyme catalyses 3',3'-cGAMP + H2O = 5'-pApG-3' + H(+). It carries out the reaction 5'-pApG-3' + H2O = 5'-ApG-3' + phosphate. Functionally, phosphodiesterase (PDE) that catalyzes the hydrolysis of 3'3'-cyclic GMP-AMP (3'3'-cGAMP), leading to linear 5'-pApG. Also displays 5'-nucleotidase activity, further hydrolyzing 5'-pApG to 5'-ApG. Counteracts the function of the 3'3'-cGAMP synthase DncV, and is involved in the modulation of intracellular 3'3'-cGAMP levels. Enhances bacterial chemotaxis and inhibits intestinal colonization in vivo. Thus exerts a crucial role in regulating bacterial infectivity through catalyzing 3'3'-cGAMP degradation. Is specific for 3'3'-cGAMP since it cannot degrade other cGAMP linkage isomers (3'2'-, 2'3'-, and 2'2'-cGAMPs). Is also able to hydrolyze c-di-GMP but not c-di-AMP. This is 3'3'-cGAMP-specific phosphodiesterase 1 from Vibrio cholerae serotype O1 (strain ATCC 39315 / El Tor Inaba N16961).